A 321-amino-acid polypeptide reads, in one-letter code: Opticin (321 aa).

The signal sequence occupies residues 1 to 19 (MKLLALLSLLILMLQEART). Tyr-61 is modified (sulfotyrosine). Residues 105–142 (LLAAPANHGLPTCLICVCLGSSVYCDDADLENIPPLPQ) form the LRRNT domain. LRR repeat units lie at residues 143–164 (TTAYLYARFNRISHIRAGDFKG), 167–188 (KLKRIDLSGNSISSIDDKALRL), 191–212 (ALRDLILPENKLVALPTLPTSI), 237–258 (KLQFLYLADNLLDAIPPSLPLS), 259–279 (LRSLHLQNNMIETMQRDAFCD), and 289–309 (PLEDIRLDGNPINLSLFPSAY). Residues Cys-278 and Cys-311 are joined by a disulfide bond. Residue Asn-301 is glycosylated (N-linked (GlcNAc...) asparagine).

This sequence belongs to the small leucine-rich proteoglycan (SLRP) family. SLRP class III subfamily. In terms of assembly, homodimer. O-glycosylated (sialylated oligosaccharides). In terms of processing, sulfated on tyrosine residues. Post-translationally, proteolytically cleaved by MMP1, MMP2, MMP3, MMP7, MMP8, MMP9, ADAMTS4, and ADAMTS5. Proteolytically cleaved by MMP13.

It localises to the secreted. It is found in the extracellular space. Its subcellular location is the extracellular matrix. Its function is as follows. Inhibits angiogenesis in the vitreous humor of the eye, and therefore represses neovascularization. Binds collagen fibrils. May be involved in collagen fiber organization via regulation of other members of the small leucine-rich repeat proteoglycan superfamily. This Bos taurus (Bovine) protein is Opticin (OPTC).